Here is a 492-residue protein sequence, read N- to C-terminus: Transmembrane protein 104 homolog (492 aa).

Over M1–V18 the chain is Cytoplasmic. Residues G19 to F39 traverse the membrane as a helical segment. Over Q40–L45 the chain is Extracellular. A helical transmembrane segment spans residues L46–I66. The Cytoplasmic portion of the chain corresponds to E67–K114. A helical membrane pass occupies residues V115–Y135. Over S136–R177 the chain is Extracellular. An N-linked (GlcNAc...) asparagine glycan is attached at N152. Residues F178–K198 traverse the membrane as a helical segment. Topologically, residues T199–R210 are cytoplasmic. A helical membrane pass occupies residues W211–A231. At A232 to N238 the chain is on the extracellular side. A helical transmembrane segment spans residues F239–I259. Topologically, residues P260 to K275 are cytoplasmic. A helical membrane pass occupies residues I276 to F296. Over A297–F325 the chain is Extracellular. N-linked (GlcNAc...) asparagine glycosylation occurs at N314. The helical transmembrane segment at L326–I346 threads the bilayer. Residues N347–K391 lie on the Cytoplasmic side of the membrane. Residues L367–E382 show a composition bias toward acidic residues. The tract at residues L367–N387 is disordered. A helical membrane pass occupies residues T392–L412. Over T413–D415 the chain is Extracellular. Residues M416–P436 form a helical membrane-spanning segment. Topologically, residues C437–R466 are cytoplasmic. Residues F467 to L487 form a helical membrane-spanning segment. Topologically, residues V488–F492 are extracellular.

This sequence belongs to the TMEM104 family.

The protein resides in the membrane. This Caenorhabditis briggsae protein is Transmembrane protein 104 homolog.